A 113-amino-acid polypeptide reads, in one-letter code: Neocarzinostatin (113 aa).

2 disulfide bridges follow: C37–C47 and C88–C93.

The protein belongs to the neocarzinostatin family.

NCS has antibiotic activity (for Gram-positive bacteria) and antitumor activity (for certain mouse tumors). NCS binds non-covalently to a chromophore which is the cytotoxic and mutagenic component of the antibiotic. The chromophore binds to DNA as a weak intercalator and causes single- and double-strand breaks. The chain is Neocarzinostatin (ncsA) from Streptomyces malayensis.